We begin with the raw amino-acid sequence, 490 residues long: GTPase Der (490 aa).

EngA-type G domains are found at residues 3–166 and 196–369; these read PVIA…PRDE and IKIA…KSAV. GTP is bound by residues 9–16, 56–60, 118–121, 202–209, 249–253, and 314–317; these read GRPNVGKS, DTGGI, NKID, DTAGV, and NKWD. The region spanning 370-454 is the KH-like domain; that stretch reads TRWPTSRLTQ…PIRIEFKGGE (85 aa). A disordered region spans residues 452-490; it reads GGENPYEGNKNTLTDRQVNKKRRMMSHHKKADKKRRDKR. The span at 470 to 490 shows a compositional bias: basic residues; it reads NKKRRMMSHHKKADKKRRDKR.

The protein belongs to the TRAFAC class TrmE-Era-EngA-EngB-Septin-like GTPase superfamily. EngA (Der) GTPase family. Associates with the 50S ribosomal subunit.

In terms of biological role, GTPase that plays an essential role in the late steps of ribosome biogenesis. The chain is GTPase Der from Pseudomonas syringae pv. syringae (strain B728a).